The chain runs to 1402 residues: Defective in tip formation protein A (1402 aa).

Disordered stretches follow at residues 1–20 (MKDI…PPQI), 37–94 (NVTT…PQIV), 109–133 (NTPS…DNDI), and 210–292 (KQSS…RRLK). Repeat copies occupy residues 12–18 (TTTVAPP) and 40–46 (TTTVQPP). The interval 12–92 (TTTVAPPQIN…TTTTTVQPPQ (81 aa)) is 4 X 7 AA repeat of T-T-T-[IV]-[AQ]-P-P. Over residues 38-47 (VTTTTVQPPQ) the composition is skewed to low complexity. Pro residues predominate over residues 48 to 58 (IVSPPSPPSPP). The segment covering 59–94 (QTTTIAPPTILPTTKTTTTTTTTTTTTTTVQPPQIV) has biased composition (low complexity). 2 tandem repeats follow at residues 60-66 (TTTIAPP) and 86-92 (TTVQPPQ). Residues 210 to 234 (KQSSQSQLQQQLSSQSLQQIQQKSK) show a composition bias toward low complexity. Positions 235–253 (QPPPQQQQQQQPPPPPIPL) are enriched in pro residues. A compositionally biased stretch (low complexity) spans 254–279 (LPQIHQQLKPKQQQEQQQQQEQQQQQ). Residues 350 to 383 (QRIKSFIENHKKKKQKYREYQSEKNQQQKSNSKK) are a coiled coil. Disordered stretches follow at residues 429–453 (DQQQ…SPMT) and 712–745 (NNNN…NLSN). Residues 430–453 (QQQQQQQQQQSTMTTTSSSSSPMT) are compositionally biased toward low complexity.

Its subcellular location is the cell surface. Required for correct organization of the actin cytoskeleton and cytokinesis. Also required for apical sorting of prestalk cells, a prerequisite for formation of the tip at the mound stage and subsequent formation of the fruiting body. May be required for cell adhesion. This is Defective in tip formation protein A (dtfA) from Dictyostelium discoideum (Social amoeba).